The chain runs to 369 residues: 2-aminoethylphosphonate--pyruvate transaminase (369 aa).

Lys193 is modified (N6-(pyridoxal phosphate)lysine).

Belongs to the class-V pyridoxal-phosphate-dependent aminotransferase family. PhnW subfamily. As to quaternary structure, homodimer. It depends on pyridoxal 5'-phosphate as a cofactor.

It carries out the reaction (2-aminoethyl)phosphonate + pyruvate = phosphonoacetaldehyde + L-alanine. Involved in phosphonate degradation. This is 2-aminoethylphosphonate--pyruvate transaminase from Burkholderia pseudomallei (strain 668).